The following is a 488-amino-acid chain: Ergochrome gene cluster transcriptional regulator CPUR_05433 (488 aa).

Positions 1–29 (MDHSIGGRNCQSGGTTASAPRSTGSDEFP) are disordered. A compositionally biased stretch (polar residues) spans 9 to 25 (NCQSGGTTASAPRSTGS). Positions 36-63 (CHACSLSKVRCSKEKPSCSRCAKRGVPC) form a DNA-binding region, zn(2)-C6 fungal-type.

Its subcellular location is the nucleus. Its function is as follows. Transcription factor; part of the gene cluster responsible for the typical purple-black color of the ergot sclerotia. The ergochrome gene cluster produces several ergot pigments including the yellow ergochrome secalonic acid and its derivatives, as well as the red anthraquinones endocrocin and clavorubin. The chain is Ergochrome gene cluster transcriptional regulator CPUR_05433 from Claviceps purpurea (strain 20.1) (Ergot fungus).